Consider the following 116-residue polypeptide: NADH-quinone oxidoreductase subunit A (116 aa).

3 consecutive transmembrane segments (helical) span residues Phe-3–Ile-23, Phe-61–Val-81, and Leu-85–Ala-105.

It belongs to the complex I subunit 3 family. NDH-1 is composed of 14 different subunits. Subunits NuoA, H, J, K, L, M, N constitute the membrane sector of the complex.

The protein localises to the cell inner membrane. The catalysed reaction is a quinone + NADH + 5 H(+)(in) = a quinol + NAD(+) + 4 H(+)(out). Functionally, NDH-1 shuttles electrons from NADH, via FMN and iron-sulfur (Fe-S) centers, to quinones in the respiratory chain. The immediate electron acceptor for the enzyme in this species is believed to be a menaquinone. Couples the redox reaction to proton translocation (for every two electrons transferred, four hydrogen ions are translocated across the cytoplasmic membrane), and thus conserves the redox energy in a proton gradient. The chain is NADH-quinone oxidoreductase subunit A from Phocaeicola vulgatus (strain ATCC 8482 / DSM 1447 / JCM 5826 / CCUG 4940 / NBRC 14291 / NCTC 11154) (Bacteroides vulgatus).